We begin with the raw amino-acid sequence, 178 residues long: Nuclear transcription factor Y subunit B-2 (178 aa).

Residues 39–45 mediate DNA binding; it reads LPIANIS. The interval 66 to 77 is subunit association domain (SAD); that stretch reads LQECVSEFISFV. The disordered stretch occupies residues 131-156; it reads SSKAGDGSVKKDTIGPHSGASSSSAQ.

It belongs to the NFYB/HAP3 subunit family. As to quaternary structure, heterotrimeric transcription factor composed of three components, NF-YA, NF-YB and NF-YC. NF-YB and NF-YC must interact and dimerize for NF-YA association and DNA binding. Interacts with NFYC4 and NFYC6. As to expression, ubiquitous.

Its subcellular location is the nucleus. Its function is as follows. Component of the NF-Y/HAP transcription factor complex. The NF-Y complex stimulates the transcription of various genes by recognizing and binding to a CCAAT motif in promoters. May regulate the expression of photosynthetic genes, and may be involved in chloroplast and amyloplast development. The sequence is that of Nuclear transcription factor Y subunit B-2 (NFYB2) from Oryza sativa subsp. japonica (Rice).